The primary structure comprises 294 residues: Cytidine deaminase (294 aa).

CMP/dCMP-type deaminase domains follow at residues 48 to 168 and 186 to 294; these read DEDA…FGPK and LTGD…VLLA. 89-91 serves as a coordination point for substrate; the sequence is NME. H102 serves as a coordination point for Zn(2+). The Proton donor role is filled by E104. 2 residues coordinate Zn(2+): C129 and C132.

It belongs to the cytidine and deoxycytidylate deaminase family. As to quaternary structure, homodimer. The cofactor is Zn(2+).

The enzyme catalyses cytidine + H2O + H(+) = uridine + NH4(+). It catalyses the reaction 2'-deoxycytidine + H2O + H(+) = 2'-deoxyuridine + NH4(+). This enzyme scavenges exogenous and endogenous cytidine and 2'-deoxycytidine for UMP synthesis. The polypeptide is Cytidine deaminase (Escherichia coli O17:K52:H18 (strain UMN026 / ExPEC)).